Reading from the N-terminus, the 147-residue chain is uncharacterized protein (147 aa).

Residues 110-133 (VLEPPTPSQPAPTPEPAVKPQPIA) are disordered. The span at 113 to 128 (PPTPSQPAPTPEPAVK) shows a compositional bias: pro residues.

This is an uncharacterized protein from Ictalurid herpesvirus 1 (strain Auburn) (IcHV-1).